The chain runs to 421 residues: UDP-N-acetylglucosamine 1-carboxyvinyltransferase (421 aa).

Residue 22-23 participates in phosphoenolpyruvate binding; that stretch reads KN. Residue R94 participates in UDP-N-acetyl-alpha-D-glucosamine binding. The active-site Proton donor is the C118. The residue at position 118 (C118) is a 2-(S-cysteinyl)pyruvic acid O-phosphothioketal. UDP-N-acetyl-alpha-D-glucosamine contacts are provided by residues 163–166, D308, and I330; that span reads KVSV.

This sequence belongs to the EPSP synthase family. MurA subfamily.

Its subcellular location is the cytoplasm. The catalysed reaction is phosphoenolpyruvate + UDP-N-acetyl-alpha-D-glucosamine = UDP-N-acetyl-3-O-(1-carboxyvinyl)-alpha-D-glucosamine + phosphate. It participates in cell wall biogenesis; peptidoglycan biosynthesis. In terms of biological role, cell wall formation. Adds enolpyruvyl to UDP-N-acetylglucosamine. The chain is UDP-N-acetylglucosamine 1-carboxyvinyltransferase from Orientia tsutsugamushi (strain Boryong) (Rickettsia tsutsugamushi).